We begin with the raw amino-acid sequence, 245 residues long: tRNA (guanine-N(1)-)-methyltransferase (245 aa).

Residues G111 and 131-136 (MGDYVL) contribute to the S-adenosyl-L-methionine site.

This sequence belongs to the RNA methyltransferase TrmD family. Homodimer.

It is found in the cytoplasm. The catalysed reaction is guanosine(37) in tRNA + S-adenosyl-L-methionine = N(1)-methylguanosine(37) in tRNA + S-adenosyl-L-homocysteine + H(+). Functionally, specifically methylates guanosine-37 in various tRNAs. The protein is tRNA (guanine-N(1)-)-methyltransferase of Staphylococcus epidermidis (strain ATCC 12228 / FDA PCI 1200).